Here is a 143-residue protein sequence, read N- to C-terminus: ATP synthase subunit b' (143 aa).

The chain crosses the membrane as a helical span at residues 6 to 26 (ATLPFMALQFLLLAAVLNAIF).

Belongs to the ATPase B chain family. In terms of assembly, F-type ATPases have 2 components, F(1) - the catalytic core - and F(0) - the membrane proton channel. F(1) has five subunits: alpha(3), beta(3), gamma(1), delta(1), epsilon(1). F(0) has four main subunits: a(1), b(1), b'(1) and c(10-14). The alpha and beta chains form an alternating ring which encloses part of the gamma chain. F(1) is attached to F(0) by a central stalk formed by the gamma and epsilon chains, while a peripheral stalk is formed by the delta, b and b' chains.

The protein localises to the cellular thylakoid membrane. Functionally, f(1)F(0) ATP synthase produces ATP from ADP in the presence of a proton or sodium gradient. F-type ATPases consist of two structural domains, F(1) containing the extramembraneous catalytic core and F(0) containing the membrane proton channel, linked together by a central stalk and a peripheral stalk. During catalysis, ATP synthesis in the catalytic domain of F(1) is coupled via a rotary mechanism of the central stalk subunits to proton translocation. Component of the F(0) channel, it forms part of the peripheral stalk, linking F(1) to F(0). The b'-subunit is a diverged and duplicated form of b found in plants and photosynthetic bacteria. This is ATP synthase subunit b' from Nostoc punctiforme (strain ATCC 29133 / PCC 73102).